Consider the following 180-residue polypeptide: Nucleoplasmin-3 (180 aa).

N-acetylalanine is present on Ala-2. Phosphoserine is present on residues Ser-13 and Ser-16. Position 27 is an omega-N-methylarginine (Arg-27). The tract at residues 141–180 is disordered; that stretch reads TMSNDVSEEESEEEEEEEDSDEEEAELCPILPAKKQGGRP. A compositionally biased stretch (acidic residues) spans 146-166; it reads VSEEESEEEEEEEDSDEEEAE. Phosphoserine is present on residues Ser-147, Ser-151, and Ser-160.

It belongs to the nucleoplasmin family. In terms of assembly, interacts with NPM (via N-terminus). Forms a pentamer with NPM at a ratio 4:1 (NPM3/NPM). Two pentamers form a decamer. Phosphorylated.

Its subcellular location is the nucleus. The protein localises to the nucleolus. In terms of biological role, plays a role in the regulation of diverse cellular processes such as ribosome biogenesis, chromatin remodeling or protein chaperoning. Modulates the histone chaperone function and the RNA-binding activity of nucleolar phosphoprotein B23/NPM. Efficiently mediates chromatin remodeling when included in a pentamer containing NPM3 and NPM. This Pongo abelii (Sumatran orangutan) protein is Nucleoplasmin-3 (NPM3).